The sequence spans 932 residues: Glycine dehydrogenase (decarboxylating) (932 aa).

At Lys-685 the chain carries N6-(pyridoxal phosphate)lysine.

The protein belongs to the GcvP family. In terms of assembly, the glycine cleavage system is composed of four proteins: P, T, L and H. The cofactor is pyridoxal 5'-phosphate.

The enzyme catalyses N(6)-[(R)-lipoyl]-L-lysyl-[glycine-cleavage complex H protein] + glycine + H(+) = N(6)-[(R)-S(8)-aminomethyldihydrolipoyl]-L-lysyl-[glycine-cleavage complex H protein] + CO2. Functionally, the glycine cleavage system catalyzes the degradation of glycine. The P protein binds the alpha-amino group of glycine through its pyridoxal phosphate cofactor; CO(2) is released and the remaining methylamine moiety is then transferred to the lipoamide cofactor of the H protein. The sequence is that of Glycine dehydrogenase (decarboxylating) from Brucella abortus (strain S19).